Reading from the N-terminus, the 720-residue chain is Hexanoyl-CoA synthase (720 aa).

The chain crosses the membrane as a helical span at residues Val242–Ala262. Arg290 to Lys293 provides a ligand contact to CoA. ATP is bound by residues Gly477–Ala479, Glu499–Thr504, Glu585, and Arg607. Gly615 is a binding site for CoA. Position 618 (Lys618) interacts with ATP. Position 681 (Gln681) interacts with CoA.

This sequence belongs to the ATP-dependent AMP-binding enzyme family. Mg(2+) serves as cofactor. Accumulates in glandular trichomes, especially in female flowers. Present at low levels in roots, stems and leaves.

It is found in the cytoplasm. It localises to the cytosol. The protein resides in the membrane. The catalysed reaction is hexanoate + ATP + CoA = hexanoyl-CoA + AMP + diphosphate. The protein operates within secondary metabolite biosynthesis; terpenoid biosynthesis. Its activity is regulated as follows. Inhibitied by high CoA concentrations. Functionally, involved in the biosynthesis of cannabinoids-related terpenophenolic natural products, which have pharmacological activity. Acyl-activating enzyme that catalyzes the conversion of hexanoic acid to hexanoyl-CoA, precursor of the cannabinoid pathway. Can also activate other fatty acids including heptanoate, octanoate and nonanoate. This Cannabis sativa (Hemp) protein is Hexanoyl-CoA synthase.